We begin with the raw amino-acid sequence, 91 residues long: MPRSLKKGPFIDLHLLKKVEVAVEKNDRKPVKTWSRRSMILPQMVGLTIAVHNGRQHVPVLISEDMVGHKLGEFAATRTYRGHAADKKAKR.

The protein belongs to the universal ribosomal protein uS19 family.

Functionally, protein S19 forms a complex with S13 that binds strongly to the 16S ribosomal RNA. The sequence is that of Small ribosomal subunit protein uS19 from Azotobacter vinelandii (strain DJ / ATCC BAA-1303).